The primary structure comprises 366 residues: Galactoside alpha-(1,2)-fucosyltransferase 1 (366 aa).

Residues 1-8 are Cytoplasmic-facing; sequence MWPLSHRH. A helical; Signal-anchor for type II membrane protein transmembrane segment spans residues 9–25; it reads LCLAFLLVCVLSAISFF. At 26–366 the chain is on the lumenal side; the sequence is LHVHQDSFRH…LSPLWTLAEP (341 aa). N-linked (GlcNAc...) asparagine glycosylation is found at N66, N302, and N328.

The protein belongs to the glycosyltransferase 11 family.

The protein localises to the golgi apparatus. It localises to the golgi stack membrane. It carries out the reaction a beta-D-galactosyl-(1-&gt;4)-N-acetyl-beta-D-glucosaminyl derivative + GDP-beta-L-fucose = an alpha-L-Fuc-(1-&gt;2)-beta-D-Gal-(1-&gt;4)-beta-D-GlcNAc derivative + GDP + H(+). It catalyses the reaction a ganglioside GA1 + GDP-beta-L-fucose = a ganglioside Fuc-GA1 + GDP + H(+). The catalysed reaction is a beta-D-Gal-(1-&gt;3)-beta-D-GlcNAc-(1-&gt;3)-beta-D-Gal-(1-&gt;4)-beta-D-Glc-(1&lt;-&gt;1')-Cer(d18:1(4E)) + GDP-beta-L-fucose = alpha-L-fucosyl-(1-&gt;2)- beta-D-galactosyl-(1-&gt;3)-N-acetyl-beta-D-glucosaminyl-(1-&gt;3)-beta-D-galactosyl-(1-&gt;4)-beta-D-glucosyl-(1&lt;-&gt;1')-N-acylsphing-4-enine + GDP + H(+). The enzyme catalyses a neolactoside nLc4Cer(d18:1(4E)) + GDP-beta-L-fucose = a neolactoside IV(2)-alpha-Fuc-nLc4Cer(d18:1(4E)) + GDP + H(+). It carries out the reaction a ganglioside GM1 + GDP-beta-L-fucose = a ganglioside Fuc-GM1 + GDP + H(+). It catalyses the reaction beta-D-galactosyl-(1-&gt;3)-N-acetyl-D-galactosamine + GDP-beta-L-fucose = alpha-L-fucosyl-(1-&gt;2)-beta-D-galactosyl-(1-&gt;3)-N-acetyl-D-galactosamine + GDP + H(+). It participates in protein modification; protein glycosylation. Its function is as follows. Catalyzes the transfer of L-fucose, from a guanosine diphosphate-beta-L-fucose, to the terminal galactose residue of glycoconjugates through an alpha(1,2) linkage leading to H antigen synthesis that is an intermediate substrate in the synthesis of ABO blood group antigens. H antigen is essential for maturation of the glomerular layer of the main olfactory bulb, in cell migration and early cell-cell contacts during tumor associated angiogenesis. Preferentially fucosylates soluble lactose and to a lesser extent fucosylates glycolipids gangliosides GA1 and GM1a. The chain is Galactoside alpha-(1,2)-fucosyltransferase 1 from Alouatta caraya (Black howler monkey).